Here is a 175-residue protein sequence, read N- to C-terminus: General stress protein 14 (175 aa).

The protein belongs to the NAD(P)H dehydrogenase (quinone) family.

This is General stress protein 14 (ywrO) from Bacillus subtilis (strain 168).